We begin with the raw amino-acid sequence, 219 residues long: MDTEDTSSASSSSVSPPSSPGGGHHHRLPPKRRAGRKKFRETRHPVYRGVRARAGGSRWVCEVREPQAQARIWLGTYPTPEMAARAHDVAAIALRGERGAELNFPDSPSTLPRARTASPEDIRLAAAQAAELYRRPPPPLALPEDPQEGTSGGGATATSGRPAAVFVDEDAIFDMPGLIDDMARGMMLTPPAIGRSLDDWAAIDDDDDHYHMDYKLWMD.

Residues 1-45 (MDTEDTSSASSSSVSPPSSPGGGHHHRLPPKRRAGRKKFRETRHP) are disordered. A compositionally biased stretch (low complexity) spans 7 to 16 (SSASSSSVSP). Residues 23–41 (GHHHRLPPKRRAGRKKFRE) show a composition bias toward basic residues. A DNA-binding region (AP2/ERF) is located at residues 46–105 (VYRGVRARAGGSRWVCEVREPQAQARIWLGTYPTPEMAARAHDVAAIALRGERGAELNFP). Residues 134 to 161 (RRPPPPLALPEDPQEGTSGGGATATSGR) form a disordered region.

The protein belongs to the AP2/ERF transcription factor family. ERF subfamily. Mostly expressed in developing seeds and apices.

The protein resides in the nucleus. Its function is as follows. Transcriptional activator that binds specifically to the DNA sequence 5'-[AG]CCGAC-3'. Binding to the C-repeat/DRE element mediates high salinity- and dehydration-inducible transcription. In Oryza sativa subsp. indica (Rice), this protein is Dehydration-responsive element-binding protein 1F (DREB1F).